Consider the following 943-residue polypeptide: Glycine dehydrogenase (decarboxylating) (943 aa).

The residue at position 695 (Lys695) is an N6-(pyridoxal phosphate)lysine.

Belongs to the GcvP family. As to quaternary structure, the glycine cleavage system is composed of four proteins: P, T, L and H. Pyridoxal 5'-phosphate is required as a cofactor.

The catalysed reaction is N(6)-[(R)-lipoyl]-L-lysyl-[glycine-cleavage complex H protein] + glycine + H(+) = N(6)-[(R)-S(8)-aminomethyldihydrolipoyl]-L-lysyl-[glycine-cleavage complex H protein] + CO2. In terms of biological role, the glycine cleavage system catalyzes the degradation of glycine. The P protein binds the alpha-amino group of glycine through its pyridoxal phosphate cofactor; CO(2) is released and the remaining methylamine moiety is then transferred to the lipoamide cofactor of the H protein. The chain is Glycine dehydrogenase (decarboxylating) from Jannaschia sp. (strain CCS1).